Here is a 635-residue protein sequence, read N- to C-terminus: ADP-ribosylation factor-binding protein GGA1 (635 aa).

M1 is modified (N-acetylmethionine). The VHS domain maps to 17 to 147; the sequence is ATNPLNKELN…MLKKQGIVKS (131 aa). The tract at residues 114 to 273 is interaction with ARF3; it reads KILELLYSWT…RLASDTEDND (160 aa). One can recognise a GAT domain in the interval 171–298; the sequence is DEEKSKMLAR…VINLYKQLVR (128 aa). S185 bears the Phosphoserine mark. The interval 299–505 is unstructured hinge; the sequence is GEEVNGDATA…ITVPLESIKP (207 aa). A disordered region spans residues 305–349; sequence DATASSIPGSTSALLDLSGLDLPPPGTTQPATPTRPGNQSSPEQL. Residues 313–325 are compositionally biased toward low complexity; the sequence is GSTSALLDLSGLD. S354 is modified (phosphoserine). Positions 357-361 match the Autoinhibitory motif; the sequence is DDELM. Disordered regions lie at residues 362–422 and 455–490; these read SLGL…LDDL and RDLQ…TPTE. The segment covering 383 to 393 has biased composition (polar residues); sequence NFQSSDGTESS. At S417 the chain carries Phosphoserine. Residues 459–476 are compositionally biased toward low complexity; sequence SKSSSPSPGAASLLHTTS. A compositionally biased stretch (pro residues) spans 477 to 486; the sequence is PEPPGPPPQA. Residues 506–627 enclose the GAE domain; it reads SSILPVTVYD…NEMGDVDQFP (122 aa).

It belongs to the GGA protein family. As to quaternary structure, monomer. Interacts with GGA2 and GGA3. Binds to clathrin and activated ARFs, including ARF1, ARF5 and ARF6. Interacts with RABEP1 and RABGEF1. Interacts with the type-I membrane proteins LRP3, M6PR/CD-MPR and IGF2R/CI-MPR. Interacts (via N-terminal VHS domain) with SORL1/sorLA and SORT1 (via C-terminal cytosolic domain). Interacts with EPN4. Interacts with CCDC91. Interacts with HEATR5B/p200a. Interacts with SYNRG/gamma-synergin. Interacts (via GAE doamin) with NECAP1 and NECAP2. Interacts (via GAE domain) with AFTPH/aftiphilin. Interacts with TSG101 and UBC. Interacts with RNF11. Interacts (via VHS domain) with BACE1 (via DXXLL motif); the interaction highly increases when BACE1 is phosphorylated at 'Ser-498'. Interacts with CNST. Interacts with ADRA2B. Interacts with ARL3; the interaction recruits, in collaboration with RABEP1, PKD1:PKD2 complex to trans-Golgi network and is required for ciliary targeting. Post-translationally, phosphorylated by CK2 and dephosphorylated by PP2A. Phosphorylation of GGA1 allows the internal DXXLL motif to bind the VHS domain and to inhibit the recognition of cargo signals. Ubiquitinated.

The protein resides in the golgi apparatus. The protein localises to the trans-Golgi network membrane. Its subcellular location is the endosome membrane. It localises to the early endosome membrane. Functionally, plays a role in protein sorting and trafficking between the trans-Golgi network (TGN) and endosomes. Mediates the ARF-dependent recruitment of clathrin to the TGN and binds ubiquitinated proteins and membrane cargo molecules with a cytosolic acidic cluster-dileucine (DXXLL) motif. Mediates export of the GPCR receptor ADRA2B to the cell surface. Required for targeting PKD1:PKD2 complex from the trans-Golgi network to the cilium membrane. Regulates retrograde transport of proteins such as phosphorylated form of BACE1 from endosomes to the trans-Golgi network. In Mus musculus (Mouse), this protein is ADP-ribosylation factor-binding protein GGA1 (Gga1).